The chain runs to 65 residues: Toxin CsEM1 (65 aa).

The 65-residue stretch at Lys1 to Asn65 folds into the LCN-type CS-alpha/beta domain. Cystine bridges form between Cys12/Cys64, Cys16/Cys40, Cys25/Cys45, and Cys29/Cys47.

This sequence belongs to the long (4 C-C) scorpion toxin superfamily. Sodium channel inhibitor family. Beta subfamily. Expressed by the venom gland.

It is found in the secreted. In terms of biological role, beta toxins bind voltage-independently at site-4 of sodium channels (Nav) and shift the voltage of activation toward more negative potentials thereby affecting sodium channel activation and promoting spontaneous and repetitive firing. Highly potent. This chain is Toxin CsEM1, found in Centruroides sculpturatus (Arizona bark scorpion).